The chain runs to 386 residues: Alanine racemase (386 aa).

Lys-38 serves as the catalytic Proton acceptor; specific for D-alanine. Lys-38 is modified (N6-(pyridoxal phosphate)lysine). Arg-136 is a substrate binding site. Tyr-267 acts as the Proton acceptor; specific for L-alanine in catalysis. Substrate is bound at residue Met-315.

The protein belongs to the alanine racemase family. Requires pyridoxal 5'-phosphate as cofactor.

The catalysed reaction is L-alanine = D-alanine. It functions in the pathway amino-acid biosynthesis; D-alanine biosynthesis; D-alanine from L-alanine: step 1/1. Its function is as follows. Catalyzes the interconversion of L-alanine and D-alanine. May also act on other amino acids. This chain is Alanine racemase (alr), found in Clostridium perfringens (strain SM101 / Type A).